A 164-amino-acid chain; its full sequence is Ubiquitin-fold modifier-conjugating enzyme 1 (164 aa).

Catalysis depends on C116, which acts as the Glycyl thioester intermediate.

It belongs to the ubiquitin-conjugating enzyme family. UFC1 subfamily.

E2-like enzyme which forms an intermediate with UFM1 via a thioester linkage. The polypeptide is Ubiquitin-fold modifier-conjugating enzyme 1 (Drosophila willistoni (Fruit fly)).